Reading from the N-terminus, the 391-residue chain is MFMFEKPYGMRDSLPGLYETKKKVRHSLTEVMNGWGYRLMETPTLEFYDTVGVQSAITDTQLFKLLDQNGQTLVLRPDMTGPIARVAASKLHEQAYPLRVGYAANVFRAQEREGGRPSEFEQVGIELIGDGSISADAEVIALVVFALKNAGLNSFKIAIGHVALAETLFVDVLGNTERANVLRRFLYEKNYVGYRQHVKQLPLSSIDKTRLLQLLELRGGREVTERAEEIVVSQEGKEVLAQLKSLWETLEDYGCTEYIRLDLSMVSHMSYYTGILFEVFADHVGSVIGSGGRYDQLLAHFNAPAPATGFGLRLDRLLEALDVKEINEPQEAVIFSKEQRLEAFAFAEKERSKGKKIVLQDLAGIENIDAMTKAFEQVTYFIGARKGEQNG.

It belongs to the class-II aminoacyl-tRNA synthetase family. HisZ subfamily. Heteromultimer composed of HisG and HisZ subunits.

Its subcellular location is the cytoplasm. Its pathway is amino-acid biosynthesis; L-histidine biosynthesis; L-histidine from 5-phospho-alpha-D-ribose 1-diphosphate: step 1/9. Required for the first step of histidine biosynthesis. May allow the feedback regulation of ATP phosphoribosyltransferase activity by histidine. This is ATP phosphoribosyltransferase regulatory subunit from Bacillus pumilus (strain SAFR-032).